A 67-amino-acid polypeptide reads, in one-letter code: DNA-directed RNA polymerase subunit omega (67 aa).

The protein belongs to the RNA polymerase subunit omega family. The RNAP catalytic core consists of 2 alpha, 1 beta, 1 beta' and 1 omega subunit. When a sigma factor is associated with the core the holoenzyme is formed, which can initiate transcription.

The catalysed reaction is RNA(n) + a ribonucleoside 5'-triphosphate = RNA(n+1) + diphosphate. Functionally, promotes RNA polymerase assembly. Latches the N- and C-terminal regions of the beta' subunit thereby facilitating its interaction with the beta and alpha subunits. The chain is DNA-directed RNA polymerase subunit omega from Nitrosomonas eutropha (strain DSM 101675 / C91 / Nm57).